A 48-amino-acid chain; its full sequence is uncharacterized protein (48 aa).

Residues 20–37 (ILASPLFFANYVLHAAIH) form a helical membrane-spanning segment.

The protein resides in the membrane. This is an uncharacterized protein from Saccharomyces cerevisiae (strain ATCC 204508 / S288c) (Baker's yeast).